The primary structure comprises 485 residues: Alpha-amylase (485 aa).

The first 18 residues, 1-18 (MFLTSVLILCSLAALSLG), serve as a signal peptide directing secretion. Q19 bears the Pyrrolidone carboxylic acid mark. The cysteines at positions 46 and 102 are disulfide-linked. 3 residues coordinate Ca(2+): N116, R164, and D173. Cysteines 152 and 166 form a disulfide. R201 is a binding site for chloride. The active-site Nucleophile is the D203. Ca(2+) is bound at residue H207. Catalysis depends on E240, which acts as the Proton donor. Residues N303 and R339 each coordinate chloride. An intrachain disulfide couples C439 to C451. N448 is a glycosylation site (N-linked (GlcNAc...) asparagine).

It belongs to the glycosyl hydrolase 13 family. As to quaternary structure, monomer. Ca(2+) serves as cofactor. The cofactor is chloride. In terms of tissue distribution, expressed in larval and adult gut.

It is found in the secreted. The enzyme catalyses Endohydrolysis of (1-&gt;4)-alpha-D-glucosidic linkages in polysaccharides containing three or more (1-&gt;4)-alpha-linked D-glucose units.. The protein is Alpha-amylase of Phaedon cochleariae (Mustard beetle).